Here is a 151-residue protein sequence, read N- to C-terminus: Putative pre-16S rRNA nuclease (151 aa).

The protein belongs to the YqgF nuclease family.

Its subcellular location is the cytoplasm. In terms of biological role, could be a nuclease involved in processing of the 5'-end of pre-16S rRNA. The chain is Putative pre-16S rRNA nuclease from Bifidobacterium longum subsp. infantis (strain ATCC 15697 / DSM 20088 / JCM 1222 / NCTC 11817 / S12).